We begin with the raw amino-acid sequence, 237 residues long: Small ribosomal subunit protein uS3 (237 aa).

A KH type-2 domain is found at 17–86; the sequence is VERHLGHELK…SPQIEVQQVD (70 aa).

The protein belongs to the universal ribosomal protein uS3 family. In terms of assembly, part of the 30S ribosomal subunit.

Functionally, binds the lower part of the 30S subunit head. The protein is Small ribosomal subunit protein uS3 of Methanospirillum hungatei JF-1 (strain ATCC 27890 / DSM 864 / NBRC 100397 / JF-1).